The chain runs to 360 residues: Dual-specificity RNA methyltransferase RlmN (360 aa).

Glutamate 91 (proton acceptor) is an active-site residue. A Radical SAM core domain is found at 110 to 343 (RSEKYTVCIS…CTIRESKGLD (234 aa)). Cysteine 117 and cysteine 348 form a disulfide bridge. Residues cysteine 124, cysteine 128, and cysteine 131 each contribute to the [4Fe-4S] cluster site. S-adenosyl-L-methionine contacts are provided by residues 174-175 (GE), serine 206, 229-231 (SLH), and asparagine 305. Residue cysteine 348 is the S-methylcysteine intermediate of the active site.

It belongs to the radical SAM superfamily. RlmN family. It depends on [4Fe-4S] cluster as a cofactor.

It is found in the cytoplasm. It catalyses the reaction adenosine(2503) in 23S rRNA + 2 reduced [2Fe-2S]-[ferredoxin] + 2 S-adenosyl-L-methionine = 2-methyladenosine(2503) in 23S rRNA + 5'-deoxyadenosine + L-methionine + 2 oxidized [2Fe-2S]-[ferredoxin] + S-adenosyl-L-homocysteine. It carries out the reaction adenosine(37) in tRNA + 2 reduced [2Fe-2S]-[ferredoxin] + 2 S-adenosyl-L-methionine = 2-methyladenosine(37) in tRNA + 5'-deoxyadenosine + L-methionine + 2 oxidized [2Fe-2S]-[ferredoxin] + S-adenosyl-L-homocysteine. Functionally, specifically methylates position 2 of adenine 2503 in 23S rRNA and position 2 of adenine 37 in tRNAs. m2A2503 modification seems to play a crucial role in the proofreading step occurring at the peptidyl transferase center and thus would serve to optimize ribosomal fidelity. The chain is Dual-specificity RNA methyltransferase RlmN from Aliarcobacter butzleri (strain RM4018) (Arcobacter butzleri).